The following is a 149-amino-acid chain: Transcriptional repressor NrdR (149 aa).

The segment at 3–34 (CPFCGHLETQVVETRISEDAEFIRRRRQCGAC) is a zinc-finger region. The 91-residue stretch at 49 to 139 (PSIVKKDGRR…VYRSFEDIDE (91 aa)) folds into the ATP-cone domain.

This sequence belongs to the NrdR family. Zn(2+) serves as cofactor.

Its function is as follows. Negatively regulates transcription of bacterial ribonucleotide reductase nrd genes and operons by binding to NrdR-boxes. The sequence is that of Transcriptional repressor NrdR from Polaromonas naphthalenivorans (strain CJ2).